The following is a 364-amino-acid chain: Caffeic acid 3-O-methyltransferase (364 aa).

131–137 (MNQDKVL) is a binding site for substrate. The interval 163-181 (AFEYHGTDSRFNRVFNEGM) is substrate binding. Residues Gly209, Asp232, Asp252, Met253, and Lys266 each coordinate S-adenosyl-L-methionine. The active-site Proton acceptor is His270.

It belongs to the class I-like SAM-binding methyltransferase superfamily. Cation-independent O-methyltransferase family. COMT subfamily. As to quaternary structure, homodimer. As to expression, confined to the vascular tissues of organs undergoing lignification such as stems and roots.

The enzyme catalyses (E)-caffeate + S-adenosyl-L-methionine = (E)-ferulate + S-adenosyl-L-homocysteine + H(+). It carries out the reaction tricetin + 2 S-adenosyl-L-methionine = 3',5'-di-O-methyltricetin + 2 S-adenosyl-L-homocysteine + 2 H(+). It catalyses the reaction luteolin + S-adenosyl-L-methionine = chrysoeriol + S-adenosyl-L-homocysteine + H(+). The catalysed reaction is tricetin + S-adenosyl-L-methionine = 3'-O-methyltricetin + S-adenosyl-L-homocysteine + H(+). It participates in aromatic compound metabolism; phenylpropanoid biosynthesis. Functionally, catalyzes the conversion of caffeic acid to ferulic acid and of 5-hydroxyferulic acid to sinapic acid. The resulting products may subsequently be converted to the corresponding alcohols that are incorporated into lignins. Can use the flavone tricetin (5,7,3',4',5'-pentahydroxyflavone) as the preferred substrate and give rise to its 3',5'-dimethyl derivative, tricin (3',5'-dimethoxy-5,7,4'-trihydroxyflavone), as the major product, and selgin to a lower extent. Tricin exhibits potential benefits for human health including relaxant effect on smooth muscle of intestinal tissues, antioxidant effect, antihistaminic activity, and growth inhibition of human malignant breast tumor cells and colon cancer cells. Can also use luteolin, quercetin and 5-hydroxyferulic acid (5HF) as substrates. This is Caffeic acid 3-O-methyltransferase from Zea mays (Maize).